The following is a 359-amino-acid chain: 3-dehydroquinate synthase (359 aa).

NAD(+) contacts are provided by residues D70–K75, G104–D108, T128–T129, K141, and K150. Positions 183, 246, and 262 each coordinate Zn(2+).

This sequence belongs to the sugar phosphate cyclases superfamily. Dehydroquinate synthase family. Requires Co(2+) as cofactor. Zn(2+) serves as cofactor. It depends on NAD(+) as a cofactor.

The protein localises to the cytoplasm. It carries out the reaction 7-phospho-2-dehydro-3-deoxy-D-arabino-heptonate = 3-dehydroquinate + phosphate. Its pathway is metabolic intermediate biosynthesis; chorismate biosynthesis; chorismate from D-erythrose 4-phosphate and phosphoenolpyruvate: step 2/7. Catalyzes the conversion of 3-deoxy-D-arabino-heptulosonate 7-phosphate (DAHP) to dehydroquinate (DHQ). The chain is 3-dehydroquinate synthase from Mycolicibacterium vanbaalenii (strain DSM 7251 / JCM 13017 / BCRC 16820 / KCTC 9966 / NRRL B-24157 / PYR-1) (Mycobacterium vanbaalenii).